We begin with the raw amino-acid sequence, 106 residues long: HIG1 domain family member 2A (106 aa).

Ala-2 is modified (N-acetylalanine). In terms of domain architecture, HIG1 spans 20–106 (VIEGFSPTVY…LAASAMKSQA (87 aa)). The next 2 helical transmembrane spans lie at 47 to 67 (PMVPIGCLGTAAALTYGLYCF) and 83 to 103 (IAAQGFTVVAILLGLAASAMK).

In terms of assembly, associates with cytochrome c oxidase (COX, complex IV); proposed complex component.

It localises to the mitochondrion membrane. Its subcellular location is the mitochondrion inner membrane. Its function is as follows. Proposed subunit of cytochrome c oxidase (COX, complex IV), which is the terminal component of the mitochondrial respiratory chain that catalyzes the reduction of oxygen to water. May be involved in cytochrome c oxidase activity. May play a role in the assembly of respiratory supercomplexes. This is HIG1 domain family member 2A (Higd2a) from Mus musculus (Mouse).